The primary structure comprises 929 residues: Dual specificity protein phosphatase PHS1 (929 aa).

Disordered regions lie at residues Met-1–Asp-27 and Pro-545–Ser-618. Basic and acidic residues-rich tracts occupy residues His-552–Met-580 and Glu-591–His-606. Positions Lys-703–Gly-848 constitute a Tyrosine-protein phosphatase domain. The active-site Phosphocysteine intermediate is Cys-792. Cys-792–Arg-798 lines the substrate pocket. The Nuclear export signal motif lies at Gln-903–Leu-911.

As to quaternary structure, interacts with MPK18. As to expression, expressed in roots, leaves and flowers.

The protein resides in the cytoplasm. The catalysed reaction is O-phospho-L-seryl-[protein] + H2O = L-seryl-[protein] + phosphate. It carries out the reaction O-phospho-L-threonyl-[protein] + H2O = L-threonyl-[protein] + phosphate. It catalyses the reaction O-phospho-L-tyrosyl-[protein] + H2O = L-tyrosyl-[protein] + phosphate. Functionally, probable dual specificity phosphatase that binds and dephosphorylates MPK18, modulating the organization and dynamics of cortical microtubules. Acts as a negative regulator of abscisic acid (ABA) signaling during seed germination and light-induced stomata aperture. This chain is Dual specificity protein phosphatase PHS1 (PHS1), found in Arabidopsis thaliana (Mouse-ear cress).